A 510-amino-acid polypeptide reads, in one-letter code: Cytochrome P450 52C2 (510 aa).

C458 is a binding site for heme.

Belongs to the cytochrome P450 family. It depends on heme as a cofactor.

The protein resides in the membrane. Together with an NADPH cytochrome P450 the enzyme system catalyzes the terminal hydroxylation as the first step in the assimilation of alkanes and fatty acids. The chain is Cytochrome P450 52C2 (CYP52C2) from Candida maltosa (Yeast).